The sequence spans 34 residues: Dermaseptin-S2 (34 aa).

This sequence belongs to the frog skin active peptide (FSAP) family. Dermaseptin subfamily. Expressed by the skin glands.

The protein resides in the secreted. Potent antimicrobial peptide with activity against bacteria and protozoa. Also has activity against fungi. Probably acts by disturbing membrane functions with its amphipathic structure. This is Dermaseptin-S2 from Phyllomedusa sauvagei (Sauvage's leaf frog).